We begin with the raw amino-acid sequence, 326 residues long: Olfactory receptor 8A1 (326 aa).

Topologically, residues 1–45 (MGFLSPMHPCRPPTQRRMAAGNHSTVTEFILKGLTKRADLQLPLF) are extracellular. Asn22 carries N-linked (GlcNAc...) asparagine glycosylation. A helical transmembrane segment spans residues 46-66 (LLFLGIYLVTIVGNLGMITLI). Residues 67-77 (CLNSQLHTPMY) are Cytoplasmic-facing. A helical transmembrane segment spans residues 78–100 (YFLSNLSLMDLCYSSVITPKMLV). At 101 to 116 (NFVSEKNIISYAGCMS) the chain is on the extracellular side. Cys114 and Cys195 are joined by a disulfide. Residues 117–137 (QLYFFLVFVIAECYMLTVMAY) form a helical membrane-spanning segment. Over 138-150 (DRYVAICHPLLYN) the chain is Cytoplasmic. Residues 151–171 (IIMSHHTCLLLVAVVYAIGLI) form a helical membrane-spanning segment. Residues 172-222 (GSTIETGLMLKLPYCEHLISHYFCDILPLMKLSCSSTYDVEMTVFFSAGFN) are Extracellular-facing. The chain crosses the membrane as a helical span at residues 223–243 (IIVTSLTVLVSYTFILSSILG). At 244 to 260 (ISTTEGRSKAFSTCSSH) the chain is on the cytoplasmic side. Residues 261-281 (LAAVGMFYGSTAFMYLKPSTI) traverse the membrane as a helical segment. The Extracellular portion of the chain corresponds to 282–287 (SSLTQE). Residues 288 to 308 (NVASVFYTTVIPMLNPLIYSL) traverse the membrane as a helical segment. Topologically, residues 309–326 (RNKEVKAAVQKTLRGKLF) are cytoplasmic.

This sequence belongs to the G-protein coupled receptor 1 family.

It is found in the cell membrane. Functionally, odorant receptor. This is Olfactory receptor 8A1 (OR8A1) from Homo sapiens (Human).